The following is a 314-amino-acid chain: MIRIGTRGSLLATTQAAIVRDALIANGHAAELVTISTLGDRSSAPIETLGVGVFTTALREAIEDGRVDAAVHSHKDLPTAQDPRFTIAAIPPRQDPRDAVVARDGLVLGELPVGSLVGTSSPRRAAQFRALGLGLEIRPLRGNLDTRLNRVSNGDLDAIVVARAGLARLGRLDDVTETLEPVQMLPAPAQGALAIECRAGDSRLATVLAELDDADTRAAVTAERALLAELEAGCSAPVGAIAEVVESIDEEGRVFEELSLRGCVAALDGSDVIRASGIGTSGRARELGLAVAAELFELGARELMWGEGNSPQGS.

At cysteine 234 the chain carries S-(dipyrrolylmethanemethyl)cysteine.

Belongs to the HMBS family. In terms of assembly, monomer. Dipyrromethane is required as a cofactor.

The catalysed reaction is 4 porphobilinogen + H2O = hydroxymethylbilane + 4 NH4(+). It participates in porphyrin-containing compound metabolism; protoporphyrin-IX biosynthesis; coproporphyrinogen-III from 5-aminolevulinate: step 2/4. Functionally, tetrapolymerization of the monopyrrole PBG into the hydroxymethylbilane pre-uroporphyrinogen in several discrete steps. This is Porphobilinogen deaminase from Mycobacterium ulcerans (strain Agy99).